A 172-amino-acid chain; its full sequence is Protein-export protein SecB (172 aa).

The protein belongs to the SecB family. As to quaternary structure, homotetramer, a dimer of dimers. One homotetramer interacts with 1 SecA dimer.

It localises to the cytoplasm. In terms of biological role, one of the proteins required for the normal export of preproteins out of the cell cytoplasm. It is a molecular chaperone that binds to a subset of precursor proteins, maintaining them in a translocation-competent state. It also specifically binds to its receptor SecA. This is Protein-export protein SecB from Dinoroseobacter shibae (strain DSM 16493 / NCIMB 14021 / DFL 12).